The primary structure comprises 282 residues: ATP synthase gamma chain (282 aa).

The protein belongs to the ATPase gamma chain family. F-type ATPases have 2 components, CF(1) - the catalytic core - and CF(0) - the membrane proton channel. CF(1) has five subunits: alpha(3), beta(3), gamma(1), delta(1), epsilon(1). CF(0) has three main subunits: a, b and c.

Its subcellular location is the cell membrane. Its function is as follows. Produces ATP from ADP in the presence of a proton gradient across the membrane. The gamma chain is believed to be important in regulating ATPase activity and the flow of protons through the CF(0) complex. The chain is ATP synthase gamma chain from Clostridium botulinum (strain ATCC 19397 / Type A).